Here is a 423-residue protein sequence, read N- to C-terminus: Histidine--tRNA ligase (423 aa).

It belongs to the class-II aminoacyl-tRNA synthetase family. As to quaternary structure, homodimer.

The protein resides in the cytoplasm. It carries out the reaction tRNA(His) + L-histidine + ATP = L-histidyl-tRNA(His) + AMP + diphosphate + H(+). This is Histidine--tRNA ligase from Prochlorococcus marinus (strain MIT 9211).